Consider the following 209-residue polypeptide: Probable phosphatase C1687.21 (209 aa).

His-8 acts as the Tele-phosphohistidine intermediate in catalysis. Glu-82 serves as the catalytic Proton donor/acceptor.

Belongs to the phosphoglycerate mutase family. BPG-dependent PGAM subfamily.

It localises to the cytoplasm. The protein localises to the nucleus. This is Probable phosphatase C1687.21 from Schizosaccharomyces pombe (strain 972 / ATCC 24843) (Fission yeast).